The following is a 451-amino-acid chain: Chromosomal replication initiator protein DnaA (451 aa).

Positions 1-77 (MTENEQIFWN…EVYNAQISVD (77 aa)) are domain I, interacts with DnaA modulators. Residues 77–110 (DYVFEEDLMIEQNQTKINQKPKQQALNSLPTVTS) are domain II. A domain III, AAA+ region region spans residues 111–329 (DLNSKYSFEN…GALKDISLVA (219 aa)). ATP-binding residues include glycine 155, glycine 157, lysine 158, and threonine 159. The interval 330–451 (NFKQIDTITV…EIETIKNKIK (122 aa)) is domain IV, binds dsDNA.

The protein belongs to the DnaA family. In terms of assembly, oligomerizes as a right-handed, spiral filament on DNA at oriC.

Its subcellular location is the cytoplasm. Plays an essential role in the initiation and regulation of chromosomal replication. ATP-DnaA binds to the origin of replication (oriC) to initiate formation of the DNA replication initiation complex once per cell cycle. Binds the DnaA box (a 9 base pair repeat at the origin) and separates the double-stranded (ds)DNA. Forms a right-handed helical filament on oriC DNA; dsDNA binds to the exterior of the filament while single-stranded (ss)DNA is stabiized in the filament's interior. The ATP-DnaA-oriC complex binds and stabilizes one strand of the AT-rich DNA unwinding element (DUE), permitting loading of DNA polymerase. After initiation quickly degrades to an ADP-DnaA complex that is not apt for DNA replication. Binds acidic phospholipids. In terms of biological role, the half-life of ATP-DnaA is 12 minutes at 37 degrees Celsius, in E.coli the half-life is about 41 minutes. The protein is Chromosomal replication initiator protein DnaA of Streptococcus pyogenes serotype M1.